The sequence spans 445 residues: Glycerophosphocholine choline phosphodiesterase ENPP6 (445 aa).

The first 22 residues, 1-22, serve as a signal peptide directing secretion; sequence MAGKLGVLLLALVLSLAQPASA. Residues Asp-32, Ser-71, and Asn-92 each contribute to the substrate site. Asp-32 and Ser-71 together coordinate Zn(2+). Ser-71 functions as the Nucleophile in the catalytic mechanism. Position 71 is a phosphoserine (Ser-71). 2 N-linked (GlcNAc...) asparagine glycosylation sites follow: Asn-100 and Asn-118. Cys-142 and Cys-154 form a disulfide bridge. Asp-193 serves as a coordination point for substrate. Residues Asp-193, His-197, Asp-240, and His-241 each contribute to the Zn(2+) site. His-241 contributes to the substrate binding site. Asn-341 carries an N-linked (GlcNAc...) asparagine glycan. His-356 lines the substrate pocket. His-356 provides a ligand contact to Zn(2+). Asn-406 carries an N-linked (GlcNAc...) asparagine glycan. Ser-421 carries GPI-anchor amidated serine lipidation. Positions 422 to 445 are cleaved as a propeptide — removed in mature form; it reads SAPGAPPCACALVTVLLVLLAILA.

Belongs to the nucleotide pyrophosphatase/phosphodiesterase family. As to quaternary structure, homodimer; disulfide-linked. Homotetramer. Requires Zn(2+) as cofactor.

It is found in the cell membrane. It catalyses the reaction sn-glycerol 3-phosphocholine + H2O = phosphocholine + glycerol + H(+). It carries out the reaction a 1-acyl-sn-glycero-3-phosphocholine + H2O = a 1-acyl-sn-glycerol + phosphocholine + H(+). The enzyme catalyses a 1-O-alkyl-sn-glycero-3-phosphocholine + H2O = a 1-O-alkyl-sn-glycerol + phosphocholine + H(+). The catalysed reaction is 1-dodecanoyl-sn-glycero-3-phosphocholine + H2O = 1-dodecanoyl-sn-glycerol + phosphocholine + H(+). It catalyses the reaction 1-hexadecanoyl-sn-glycero-3-phosphocholine + H2O = 1-hexadecanoyl-sn-glycerol + phosphocholine + H(+). It carries out the reaction 1-(5Z,8Z,11Z,14Z-eicosatetraenoyl)-sn-glycero-3-phosphocholine + H2O = 1-(5Z,8Z,11Z,14Z-eicosatetraenoyl)-sn-glycerol + phosphocholine + H(+). The enzyme catalyses 1-tetradecanoyl-sn-glycero-3-phosphocholine + H2O = 1-tetradecanoyl-sn-glycerol + phosphocholine + H(+). The catalysed reaction is sphing-4-enine-phosphocholine + H2O = sphing-4-enine + phosphocholine + H(+). It catalyses the reaction 1-(9Z-octadecenoyl)-sn-glycero-3-phosphocholine + H2O = 1-(9Z-octadecenoyl)-sn-glycerol + phosphocholine + H(+). It carries out the reaction 1-(9Z,12Z)-octadecadienoyl-sn-glycero-3-phosphocholine + H2O = 1-(9Z,12Z-octadecadienoyl)-sn-glycerol + phosphocholine + H(+). The enzyme catalyses glycero-2-phosphocholine + H2O = phosphocholine + glycerol + H(+). Its activity is regulated as follows. Inhibited by EDTA and EGTA in vitro. Functionally, choline-specific glycerophosphodiesterase that hydrolyzes glycerophosphocholine (GPC) and lysophosphatidylcholine (LPC) and contributes to supplying choline to the cells. Has a preference for LPC with short (12:0 and 14:0) or polyunsaturated (18:2 and 20:4) fatty acids. In vitro, hydrolyzes only choline-containing lysophospholipids, such as sphingosylphosphorylcholine (SPC), platelet-activating factor (PAF) and lysoPAF, but not other lysophospholipids. The protein is Glycerophosphocholine choline phosphodiesterase ENPP6 of Bos taurus (Bovine).